Here is a 404-residue protein sequence, read N- to C-terminus: Cysteine--tRNA ligase (404 aa).

Zn(2+) is bound at residue cysteine 14. The 'HIGH' region motif lies at proline 16 to asparagine 26. Cysteine 190, histidine 216, and glutamate 220 together coordinate Zn(2+). The short motif at lysine 248–serine 252 is the 'KMSKS' region element. Lysine 251 lines the ATP pocket.

Belongs to the class-I aminoacyl-tRNA synthetase family. In terms of assembly, monomer. Zn(2+) serves as cofactor.

Its subcellular location is the cytoplasm. The catalysed reaction is tRNA(Cys) + L-cysteine + ATP = L-cysteinyl-tRNA(Cys) + AMP + diphosphate. This chain is Cysteine--tRNA ligase, found in Mesomycoplasma hyopneumoniae (strain 232) (Mycoplasma hyopneumoniae).